Reading from the N-terminus, the 813-residue chain is MSKTEHPASGASPETRAAALRATLNRYAHEYYVLDQPSVPDAEYDRLYRELEALEAEHPELRTPDSPTLRVGGAVLPEFAPVRHVVPMLSIRTETDTTAGGALDFDASVRRELGLAESDPPVEYAAELKFDGLAINLRYEKGFLVQAATRGDGATGEDVTQNIRTIRQIPLGLRPVGGAVPDVLEVRGEVYMRRDDFERLNARQRERGDKTFVNPRNTAAGAVRQLDPKMAAERPLSFFAYGLGEAAGWSGMPDTHSGMLDALVAYGFPVSKERAAVKGGEGLVQFHAAIGAKRDSLPFDIDGVVYKVNSLALQRELGFRTREPRWAVAHKYPAQEALTTVESIGVQVGRTGAITPVARLVPVFVGGVTVTNATLHNEDEVRRKDVRVGDTVIVRRAGDVIPEVVAVVLERRPMEDVPGSDLFNPTQQPKHPPFELPRSCPVCGSHVVREEGEAVARCSGGLFCSAQRKEAIRHFAGRRMMDIEGLGERYIDNLVELEYVHGIADLYRLTLDDFLEMKRRADERDGVTPETVAAGKIATKWAENLLDGIRASKTPPLARFLFAMGIRHVGESTAKTLADWLGSLAIVRRAPAPLLLTLPDVGATVAEAIADFFAEPKNQQALDALLTAGVAPQGEHPPSAKLRDQLEPAELYAALGVPKLTAIRSKQLATLVPSLAQLANVDTAQLEGLPADVAASLLAWLDADDHRTRLGTLDALRAELLAAMPAGAAEEGALSGKTVVLTGTLPTLSRDEAKAMLEAAGAKVSGSVSKKTDYVVAGVEAGSKLARAQELGVRVLDEAGMLALLQNPPGDSA.

Residues 41-45 (DAEYD), 90-91 (SI), and Glu-127 contribute to the NAD(+) site. Lys-129 functions as the N6-AMP-lysine intermediate in the catalytic mechanism. NAD(+) is bound by residues Arg-150, Glu-189, Lys-307, and Lys-331. Positions 440, 443, 458, and 464 each coordinate Zn(2+). The 85-residue stretch at 729–813 (AEEGALSGKT…LLQNPPGDSA (85 aa)) folds into the BRCT domain.

This sequence belongs to the NAD-dependent DNA ligase family. LigA subfamily. Mg(2+) is required as a cofactor. Mn(2+) serves as cofactor.

The catalysed reaction is NAD(+) + (deoxyribonucleotide)n-3'-hydroxyl + 5'-phospho-(deoxyribonucleotide)m = (deoxyribonucleotide)n+m + AMP + beta-nicotinamide D-nucleotide.. Its function is as follows. DNA ligase that catalyzes the formation of phosphodiester linkages between 5'-phosphoryl and 3'-hydroxyl groups in double-stranded DNA using NAD as a coenzyme and as the energy source for the reaction. It is essential for DNA replication and repair of damaged DNA. The protein is DNA ligase of Ralstonia nicotianae (strain ATCC BAA-1114 / GMI1000) (Ralstonia solanacearum).